Reading from the N-terminus, the 159-residue chain is Cyclic pyranopterin monophosphate synthase (159 aa).

Substrate is bound by residues 75–77 (LCH) and 113–114 (ME). The active site involves Asp-128.

This sequence belongs to the MoaC family. As to quaternary structure, homohexamer; trimer of dimers.

The catalysed reaction is (8S)-3',8-cyclo-7,8-dihydroguanosine 5'-triphosphate = cyclic pyranopterin phosphate + diphosphate. It participates in cofactor biosynthesis; molybdopterin biosynthesis. Its function is as follows. Catalyzes the conversion of (8S)-3',8-cyclo-7,8-dihydroguanosine 5'-triphosphate to cyclic pyranopterin monophosphate (cPMP). This Aliivibrio salmonicida (strain LFI1238) (Vibrio salmonicida (strain LFI1238)) protein is Cyclic pyranopterin monophosphate synthase.